The sequence spans 287 residues: Cbb3-type cytochrome c oxidase subunit FixP (287 aa).

Over Met-1–Trp-33 the chain is Cytoplasmic. The chain crosses the membrane as a helical span at residues Ile-34–Ile-54. The Periplasmic segment spans residues Pro-55–Thr-287. Cytochrome c domains lie at Phe-108–Thr-196 and Gly-203–Gly-284. Cys-121, Cys-124, His-125, Met-173, Cys-216, Cys-219, His-220, and Met-261 together coordinate heme c.

This sequence belongs to the CcoP / FixP family. In terms of assembly, component of the cbb3-type cytochrome c oxidase at least composed of FixN, FixO, FixQ and FixP. Heme c serves as cofactor.

Its subcellular location is the cell inner membrane. It participates in energy metabolism; oxidative phosphorylation. In terms of biological role, C-type cytochrome. Part of the cbb3-type cytochrome c oxidase complex. FixP subunit is required for transferring electrons from donor cytochrome c via its heme groups to FixO subunit. From there, electrons are shuttled to the catalytic binuclear center of FixN subunit where oxygen reduction takes place. The complex also functions as a proton pump. The polypeptide is Cbb3-type cytochrome c oxidase subunit FixP (Rhizobium etli (strain ATCC 51251 / DSM 11541 / JCM 21823 / NBRC 15573 / CFN 42)).